Reading from the N-terminus, the 862-residue chain is Bifunctional uridylyltransferase/uridylyl-removing enzyme (862 aa).

Positions 1–328 (MSTAAIPTDA…FPRRAGAAIV (328 aa)) are uridylyltransferase. The uridylyl-removing stretch occupies residues 329–685 (INERFQAVRE…ARVSDADQGV (357 aa)). In terms of domain architecture, HD spans 447-563 (VDQHIMMVLR…GRFADTVGTE (117 aa)). ACT domains are found at residues 686-765 (QVMV…DRPS) and 794-862 (ILSL…RLHI).

It belongs to the GlnD family. The cofactor is Mg(2+).

The catalysed reaction is [protein-PII]-L-tyrosine + UTP = [protein-PII]-uridylyl-L-tyrosine + diphosphate. It catalyses the reaction [protein-PII]-uridylyl-L-tyrosine + H2O = [protein-PII]-L-tyrosine + UMP + H(+). With respect to regulation, uridylyltransferase (UTase) activity is inhibited by glutamine, while glutamine activates uridylyl-removing (UR) activity. Functionally, modifies, by uridylylation and deuridylylation, the PII regulatory proteins (GlnB and homologs), in response to the nitrogen status of the cell that GlnD senses through the glutamine level. Under low glutamine levels, catalyzes the conversion of the PII proteins and UTP to PII-UMP and PPi, while under higher glutamine levels, GlnD hydrolyzes PII-UMP to PII and UMP (deuridylylation). Thus, controls uridylylation state and activity of the PII proteins, and plays an important role in the regulation of nitrogen assimilation and metabolism. In Aromatoleum aromaticum (strain DSM 19018 / LMG 30748 / EbN1) (Azoarcus sp. (strain EbN1)), this protein is Bifunctional uridylyltransferase/uridylyl-removing enzyme.